A 574-amino-acid polypeptide reads, in one-letter code: Bifunctional NADP phosphatase/NAD kinase (574 aa).

Residues Met-1–Trp-297 form an NADP phosphatase region. Mg(2+) contacts are provided by Glu-69, Asp-87, Ile-89, Asp-90, and Asp-243. The NAD kinase stretch occupies residues Val-302 to Lys-574. Asp-362 (proton acceptor) is an active-site residue. Residues Asp-362–Gly-363, Arg-367, Asn-436–Glu-437, Lys-447, Arg-464, Asp-466, and Thr-477–Ser-482 each bind NAD(+).

In the N-terminal section; belongs to the inositol monophosphatase superfamily. The protein in the C-terminal section; belongs to the NAD kinase family. In terms of assembly, homotetramer. Mg(2+) serves as cofactor.

The protein resides in the cytoplasm. It carries out the reaction NAD(+) + ATP = ADP + NADP(+) + H(+). It catalyses the reaction NADP(+) + H2O = phosphate + NAD(+). The catalysed reaction is UTP + NAD(+) = UDP + NADP(+) + H(+). The enzyme catalyses 5-methyl-UTP + NAD(+) = 5-methyl-UDP + NADP(+) + H(+). It carries out the reaction CTP + NAD(+) = CDP + NADP(+) + H(+). It catalyses the reaction GTP + NAD(+) = GDP + NADP(+) + H(+). The catalysed reaction is dATP + NAD(+) = dADP + NADP(+) + H(+). The enzyme catalyses NADPH + H2O = phosphate + NADH. It carries out the reaction adenosine 2'-phosphate + H2O = adenosine + phosphate. It catalyses the reaction beta-D-fructose 1,6-bisphosphate + H2O = beta-D-fructose 6-phosphate + phosphate. Phosphatase activity is slightly inhibited by ADP, NADH and ATP, and moderately inhibited by NAD and 5'-AMP. Kinase activity is slightly inhibited by ADP and NADP. Functionally, involved in the regulation of the intracellular balance between NAD(H) and NADP(H), and is a key enzyme in the biosynthesis of NADP. Catalyzes the phosphorylation and dephosphorylation of NAD and NADP, respectively. Although it shows conflicting dual activities and is able to supply NADP, it seems that its physiological role is to prevent excess accumulation of NADP. Kinase can use ATP and other nucleoside triphosphates (UTP, TTP, CTP, GTP) as well as inorganic polyphosphate (poly(P)) as phosphoryl donors, however poly(P) is not considered to be the physiological phosphoryl donor. NAD is the preferred substrate for the kinase, but NADH can also be used as phosphoryl acceptor. Phosphatase can use NADP or NADPH as phosphoryl donor, but NADP is the preferred substrate. Phosphatase also has an activity toward the terminal phosphate group at C-2 of adenosine in 2'-AMP and toward the phosphate group at C-1 of fructose 1,6-bisphosphate, but not toward inositol 1-phosphate. This is Bifunctional NADP phosphatase/NAD kinase from Methanocaldococcus jannaschii (strain ATCC 43067 / DSM 2661 / JAL-1 / JCM 10045 / NBRC 100440) (Methanococcus jannaschii).